Consider the following 149-residue polypeptide: UPF0260 protein Psyr_1567 (149 aa).

It belongs to the UPF0260 family.

The chain is UPF0260 protein Psyr_1567 from Pseudomonas syringae pv. syringae (strain B728a).